The primary structure comprises 571 residues: Adenine deaminase (571 aa).

This sequence belongs to the metallo-dependent hydrolases superfamily. Adenine deaminase family. Mn(2+) serves as cofactor.

It carries out the reaction adenine + H2O + H(+) = hypoxanthine + NH4(+). In Dehalococcoides mccartyi (strain ATCC BAA-2266 / KCTC 15142 / 195) (Dehalococcoides ethenogenes (strain 195)), this protein is Adenine deaminase.